We begin with the raw amino-acid sequence, 1361 residues long: Pre-mRNA-splicing factor RSE1 (1361 aa).

Disordered regions lie at residues 788–811 (NNEEEEEEEEDDDDEKEEEEINSS) and 893–912 (VNKQENGGGDESNEEEEDEM). 2 stretches are compositionally biased toward acidic residues: residues 789–808 (NEEEEEEEEDDDDEKEEEEI) and 903–912 (ESNEEEEDEM).

The protein belongs to the RSE1 family. In terms of assembly, belongs to the SF3B complex, a U2 associated sub-complex of the spliceosome. The SF3B complex is composed of at least CUS1, HSH49, HSH155, RDS3 and RSE1. Also belongs to the CWC complex (or CEF1-associated complex), a spliceosome sub-complex reminiscent of a late-stage spliceosome composed of the U2, U5 and U6 snRNAs and at least BUD13, BUD31, BRR2, CDC40, CEF1, CLF1, CUS1, CWC2, CWC15, CWC21, CWC22, CWC23, CWC24, CWC25, CWC27, ECM2, HSH155, IST3, ISY1, LEA1, MSL1, NTC20, PRP8, PRP9, PRP11, PRP19, PRP21, PRP22, PRP45, PRP46, SLU7, SMB1, SMD1, SMD2, SMD3, SMX2, SMX3, SNT309, SNU114, SPP2, SYF1, SYF2, RSE1 and YJU2. Interacts with RDS3.

The protein resides in the nucleus. In terms of biological role, involved in G2/M transition. Required for pre-mRNA splicing and endoplasmic reticulum (ER) to Golgi secretion pathway. U2 snRNPs associated protein required for the pre-spliceosome assembly. The involvement in ER to Golgi secretion is probably indirect and due to the splicing of the pre-mRNA coding for SAR1, a small GTP-binding protein required for COPII vesicle formation from the ER. The protein is Pre-mRNA-splicing factor RSE1 (RSE1) of Saccharomyces cerevisiae (strain ATCC 204508 / S288c) (Baker's yeast).